The chain runs to 554 residues: Valerianol synthase TPS8 (554 aa).

The DDXXD motif signature appears at 288-292 (QHSVG). Mg(2+) contacts are provided by aspartate 307, aspartate 311, aspartate 452, serine 456, and glutamate 460.

The protein belongs to the terpene synthase family. Mg(2+) serves as cofactor.

The enzyme catalyses (2E,6E)-farnesyl diphosphate + H2O = valerianol + diphosphate. The protein operates within secondary metabolite biosynthesis; terpenoid biosynthesis. Its function is as follows. Terpene synthase that catalyzes the biosynthesis of the terpene valerianol. The chain is Valerianol synthase TPS8 from Camellia sinensis (Tea plant).